A 371-amino-acid polypeptide reads, in one-letter code: RNA polymerase sigma factor SigA (371 aa).

A sigma-70 factor domain-2 region spans residues 137 to 207 (LAEANLRLVV…TRAIADQART (71 aa)). The Interaction with polymerase core subunit RpoC motif lies at 161 to 164 (DLIQ). The interval 216 to 292 (ETINKLVREQ…DEVIENPVDY (77 aa)) is sigma-70 factor domain-3. The interval 305–358 (VLDTLTDREENVLRLRFGLDDGKMRTLEDVGKVFDVTRERIRQIEAKALRKLRH) is sigma-70 factor domain-4. The H-T-H motif DNA-binding region spans 331 to 350 (LEDVGKVFDVTRERIRQIEA).

This sequence belongs to the sigma-70 factor family. RpoD/SigA subfamily. As to quaternary structure, interacts transiently with the RNA polymerase catalytic core.

It localises to the cytoplasm. Sigma factors are initiation factors that promote the attachment of RNA polymerase to specific initiation sites and are then released. This sigma factor is the primary sigma factor during exponential growth. This is RNA polymerase sigma factor SigA from Streptococcus mutans serotype c (strain ATCC 700610 / UA159).